The sequence spans 827 residues: Transcription factor SOX-6 (827 aa).

Polar residues predominate over residues 1 to 10; sequence MSSKQATSPF. The tract at residues 1-51 is disordered; it reads MSSKQATSPFACTVDGEETMTQDLTSREKEEGSDQHPASHLPLHPIMHNKP. Over residues 25-34 the composition is skewed to basic and acidic residues; sequence TSREKEEGSD. Thr-119 carries the post-translational modification Phosphothreonine. Residues 184–257 adopt a coiled-coil conformation; sequence LAEKERQLST…QHKINLLQQQ (74 aa). Disordered stretches follow at residues 329–360 and 380–470; these read HVSHPQINPRLKGISDRLGRNLDPYEHGGGHS and SPGA…PIGG. The segment covering 341–357 has biased composition (basic and acidic residues); the sequence is GISDRLGRNLDPYEHGG. Ser-399 is modified (phosphoserine). A Phosphothreonine modification is found at Thr-401. Glycyl lysine isopeptide (Lys-Gly) (interchain with G-Cter in SUMO) cross-links involve residues Lys-404 and Lys-417. Composition is skewed to polar residues over residues 421–431 and 439–461; these read TAQPLNLSSRP and SPTSPTQSLFPASKTSPVNLPNK. A phosphoserine mark is found at Ser-439 and Ser-442. A DNA-binding region (HMG box) is located at residues 620–688; the sequence is IKRPMNAFMV…IHLEKYPNYK (69 aa). Disordered stretches follow at residues 752-772 and 786-827; these read TPSPQMTSDCSSTSASPEPSL and ASLA…VSAN. Over residues 795–808 the composition is skewed to acidic residues; that stretch reads NGEDEMEAYDDYED.

Homodimer. Interacts with DAZAP2. May interact with CENPK. In terms of processing, sumoylation inhibits the transcriptional activity.

The protein localises to the nucleus. Its subcellular location is the cytoplasm. Its function is as follows. Transcription factor that plays a key role in several developmental processes, including neurogenesis, chondrocytes differentiation and cartilage formation. Specifically binds the 5'-AACAAT-3' DNA motif present in enhancers and super-enhancers and promotes expression of genes important for chondrogenesis. Required for overt chondrogenesis when condensed prechondrocytes differentiate into early stage chondrocytes: SOX5 and SOX6 cooperatively bind with SOX9 on active enhancers and super-enhancers associated with cartilage-specific genes, and thereby potentiate SOX9's ability to transactivate. Not involved in precartilaginous condensation, the first step in chondrogenesis, during which skeletal progenitors differentiate into prechondrocytes. Together with SOX5, required to form and maintain a pool of highly proliferating chondroblasts between epiphyses and metaphyses, to form columnar chondroblasts, delay chondrocyte prehypertrophy but promote hypertrophy, and to delay terminal differentiation of chondrocytes on contact with ossification fronts. Binds to the proximal promoter region of the myelin protein MPZ gene, and is thereby involved in the differentiation of oligodendroglia in the developing spinal tube. Binds to the gene promoter of MBP and acts as a transcriptional repressor. The chain is Transcription factor SOX-6 from Rattus norvegicus (Rat).